The sequence spans 295 residues: sn-glycerol-3-phosphate transport system permease protein UgpA (295 aa).

Over 1 to 11 the chain is Cytoplasmic; that stretch reads MSSSRPVFRSR. A helical transmembrane segment spans residues 12 to 32; it reads WLPYLLVAPQLIITVIFFIWP. At 33-80 the chain is on the periplasmic side; the sequence is AGEALWYSLQSVDPFGFSSQFVGLDNFVTLFHDSYYLDSFWTTIKFST. Positions 76-284 constitute an ABC transmembrane type-1 domain; it reads IKFSTFVTVS…FLVIVLTVVQ (209 aa). Residues 81 to 101 form a helical membrane-spanning segment; the sequence is FVTVSGLLVSLFFAALVEYIV. The Cytoplasmic portion of the chain corresponds to 102–109; it reads RGSRFYQT. Residues 110–130 traverse the membrane as a helical segment; sequence LMLLPYAVAPAVAAVLWIFLF. Topologically, residues 131–156 are periplasmic; it reads NPGRGLITHFLAEFGYDWNHAQNSGQ. Residues 157–177 traverse the membrane as a helical segment; that stretch reads AMFLVVFASVWKQISYNFLFF. Over 178–207 the chain is Cytoplasmic; it reads YAALQSIPRSLIEAAAIDGAGPIRRFFKIA. The chain crosses the membrane as a helical span at residues 208–228; it reads LPLIAPVSFFLLVVNLVYAFF. Residues 229–262 lie on the Periplasmic side of the membrane; sequence DTFPVIDAATSGGPVQATTTLIYKIYREGFTGLD. The helical transmembrane segment at 263-283 threads the bilayer; it reads LASSAAQSMVLMFLVIVLTVV. Topologically, residues 284-295 are cytoplasmic; the sequence is QFRYVESKVRYQ.

The protein belongs to the binding-protein-dependent transport system permease family. UgpAE subfamily. As to quaternary structure, the complex is composed of two ATP-binding proteins (UgpC), two transmembrane proteins (UgpA and UgpE) and a solute-binding protein (UgpB).

The protein resides in the cell inner membrane. Part of the ABC transporter complex UgpBAEC involved in sn-glycerol-3-phosphate (G3P) import. Probably responsible for the translocation of the substrate across the membrane. This is sn-glycerol-3-phosphate transport system permease protein UgpA (ugpA) from Shigella flexneri.